A 1023-amino-acid chain; its full sequence is 2-oxoglutarate dehydrogenase complex component E1 (1023 aa).

Residues 1–40 (MFHLRTCAAKLRPLTASQTVKTFSQNRPAAARTFQQIRCY) constitute a mitochondrion transit peptide. Lysine 74 is modified (N6-succinyllysine). The residue at position 100 (serine 100) is a Phosphoserine. Positions 143, 156, and 158 each coordinate Ca(2+). Arginine 312 lines the thiamine diphosphate pocket. An N6-acetyllysine modification is found at lysine 401. Thiamine diphosphate-binding residues include aspartate 411, asparagine 444, and isoleucine 446. Mg(2+) contacts are provided by aspartate 411, asparagine 444, and isoleucine 446. A Glycyl lysine isopeptide (Lys-Gly) (interchain with G-Cter in ubiquitin) cross-link involves residue lysine 534. Lysine 564 carries the post-translational modification N6-succinyllysine. Glutamine 676 serves as a coordination point for thiamine diphosphate. Lysine 970 is modified (N6-acetyllysine).

Belongs to the alpha-ketoglutarate dehydrogenase family. In terms of assembly, homodimer. The 2-oxoglutarate dehydrogenase complex is composed of OGDH (2-oxoglutarate dehydrogenase; E1), DLST (dihydrolipoamide succinyltransferase; E2), DLD (dihydrolipoamide dehydrogenase; E3) and the assembly factor KGD4. It contains multiple copies of the three enzymatic components (E1, E2 and E3). In the nucleus, the 2-oxoglutarate dehydrogenase complex associates with KAT2A. Interacts with ABHD11; this interaction maintains the functional lipoylation of the 2-oxoglutarate dehydrogenase complex. Requires thiamine diphosphate as cofactor. Mg(2+) serves as cofactor.

It localises to the mitochondrion. The protein resides in the nucleus. It carries out the reaction N(6)-[(R)-lipoyl]-L-lysyl-[protein] + 2-oxoglutarate + H(+) = N(6)-[(R)-S(8)-succinyldihydrolipoyl]-L-lysyl-[protein] + CO2. Calcium ions and ADP stimulate, whereas ATP and NADH reduce catalytic activity. 2-oxoglutarate dehydrogenase (E1o) component of the 2-oxoglutarate dehydrogenase complex (OGDHC). Participates in the first step, rate limiting for the overall conversion of 2-oxoglutarate to succinyl-CoA and CO(2) catalyzed by the whole OGDHC. Catalyzes the irreversible decarboxylation of 2-oxoglutarate (alpha-ketoglutarate) via the thiamine diphosphate (ThDP) cofactor and subsequent transfer of the decarboxylated acyl intermediate on an oxidized dihydrolipoyl group that is covalently amidated to the E2 enzyme (dihydrolipoyllysine-residue succinyltransferase or DLST). Plays a key role in the Krebs (citric acid) cycle, which is a common pathway for oxidation of fuel molecules, including carbohydrates, fatty acids, and amino acids. Can catalyze the decarboxylation of 2-oxoadipate in vitro, but at a much lower rate than 2-oxoglutarate. Mainly active in the mitochondrion. A fraction of the 2-oxoglutarate dehydrogenase complex also localizes in the nucleus and is required for lysine succinylation of histones: associates with KAT2A on chromatin and provides succinyl-CoA to histone succinyltransferase KAT2A. The sequence is that of 2-oxoglutarate dehydrogenase complex component E1 from Macaca fascicularis (Crab-eating macaque).